A 247-amino-acid chain; its full sequence is ATP synthase subunit a (247 aa).

6 consecutive transmembrane segments (helical) span residues 24–44, 82–102, 112–132, 141–161, 194–214, and 219–239; these read IAFT…SLLM, FFPF…VGII, IIVT…YGFY, LFVP…IEVI, MLGA…ALVV, and LELL…CIYI.

This sequence belongs to the ATPase A chain family. As to quaternary structure, F-type ATPases have 2 components, CF(1) - the catalytic core - and CF(0) - the membrane proton channel. CF(1) has five subunits: alpha(3), beta(3), gamma(1), delta(1), epsilon(1). CF(0) has three main subunits: a(1), b(2) and c(9-12). The alpha and beta chains form an alternating ring which encloses part of the gamma chain. CF(1) is attached to CF(0) by a central stalk formed by the gamma and epsilon chains, while a peripheral stalk is formed by the delta and b chains.

Its subcellular location is the cell inner membrane. In terms of biological role, key component of the proton channel; it plays a direct role in the translocation of protons across the membrane. The chain is ATP synthase subunit a from Nitrobacter winogradskyi (strain ATCC 25391 / DSM 10237 / CIP 104748 / NCIMB 11846 / Nb-255).